Consider the following 197-residue polypeptide: Scoloptoxin SSD20 (197 aa).

Positions 1-6 (PPMTTE) are cleaved as a signal peptide.

Expressed by the venom gland.

The protein localises to the secreted. May act as a voltage-gated potassium channel inhibitor. Is highly similar to the subunit beta of SSD14 which, when complexed with subunit alpha, induces platelet aggregation and hemolysis. The protein is Scoloptoxin SSD20 of Scolopendra dehaani (Thai centipede).